The sequence spans 473 residues: MKTLYSLRRFSHVETLFNTTLAVAGRDQETTGFAWWAGNARLINLSGKLLGAHVAHAGLIVFWAGAMNLFEVAHFGPEKPMYEQGLILLPHLATLGWGVGPGGEIIDTFPYFVSGVLHLISSAVLGFGGIYHALLGPEIIEESFPLFRYVWKDRNKMTTILGIHLILLGLGAFLLVFKALYFGGVYDTWAPGGGDVRKITNLTLSPSIIFGFLLKSPFGGDGWIVSVDDLEDIIGGHVWVGSICIVGGIWHILTKPFAWARRALVWSGEAYLSYSLGALSIFGFTACCFVWFNNTAYPSEFYGPTGPEASQAQAFTFLVRDQRLGANVGAAQGPTGLGKYLMRSPTGEVIFGGETMRFWDLRAPWLEPLRGPNGLDLNRLKKDIQPWQERRSAEYMTHAPLGSLNSVGGVATEINAVNYVSPRSWLATSHFCLGFFFFVGHLWHAGRARAAAAGFEKGIDRDFEPVLSMTPLN.

Residues 1–14 constitute a propeptide that is removed on maturation; it reads MKTLYSLRRFSHVE. Threonine 15 bears the N-acetylthreonine mark. Threonine 15 is subject to Phosphothreonine. 5 helical membrane passes run 69 to 93, 134 to 155, 178 to 200, 255 to 275, and 291 to 312; these read LFEVAHFGPEKPMYEQGLILLPHLA, LLGPEIIEESFPLFRYVWKDRN, KALYFGGVYDTWAPGGGDVRKIT, KPFAWARRALVWSGEAYLSYS, and WFNNTAYPSEFYGPTGPEASQA. Glutamate 367 contributes to the [CaMn4O5] cluster binding site. The chain crosses the membrane as a helical span at residues 447–471; that stretch reads RARAAAAGFEKGIDRDFEPVLSMTP.

The protein belongs to the PsbB/PsbC family. PsbC subfamily. PSII is composed of 1 copy each of membrane proteins PsbA, PsbB, PsbC, PsbD, PsbE, PsbF, PsbH, PsbI, PsbJ, PsbK, PsbL, PsbM, PsbT, PsbX, PsbY, PsbZ, Psb30/Ycf12, at least 3 peripheral proteins of the oxygen-evolving complex and a large number of cofactors. It forms dimeric complexes. Binds multiple chlorophylls and provides some of the ligands for the Ca-4Mn-5O cluster of the oxygen-evolving complex. It may also provide a ligand for a Cl- that is required for oxygen evolution. PSII binds additional chlorophylls, carotenoids and specific lipids. serves as cofactor.

The protein localises to the plastid membrane. In terms of biological role, one of the components of the core complex of photosystem II (PSII). It binds chlorophyll and helps catalyze the primary light-induced photochemical processes of PSII. PSII is a light-driven water:plastoquinone oxidoreductase, using light energy to abstract electrons from H(2)O, generating O(2) and a proton gradient subsequently used for ATP formation. This chain is Photosystem II CP43 reaction center protein, found in Cuscuta obtusiflora (Peruvian dodder).